Consider the following 211-residue polypeptide: Ribonuclease MRP protein subunit rmp1 (211 aa).

A helical membrane pass occupies residues 73 to 93; that stretch reads PALGLVLLGILARVWFVMGGI. The residue at position 156 (S156) is a Phosphoserine. A disordered region spans residues 178–211; that stretch reads SQGTKRKSKNSNSTVKKKKKRARKGRDEIDDIFG. Residues 181 to 201 show a composition bias toward basic residues; sequence TKRKSKNSNSTVKKKKKRARK.

As to quaternary structure, component of RNase MRP complex which consists of an RNA moiety and at least 10 protein subunits.

It localises to the membrane. The protein resides in the nucleus. The protein localises to the nucleolus. Its function is as follows. Functions as part of ribonuclease MRP (RNase MRP), which is involved in rRNA processing in mitochondria. The chain is Ribonuclease MRP protein subunit rmp1 from Schizosaccharomyces pombe (strain 972 / ATCC 24843) (Fission yeast).